Here is a 305-residue protein sequence, read N- to C-terminus: MSIRILPENEIKPSASAFEIPPLLFANPKNLYTRRAKRLRELAKNNPLRDYLEFAAHLVDIQLTLLETAPIGNYAEKLTAYLTENQGQKPLNKQQFARDEKWLELLLALIKQCKPYATGAILTTLEFLEKASYAELNNLADHLLNERYEQVSPDQSVFIWLALSLYWTQLAQQLPRHTQAEIGERHTCPVCGSAPITSVIHLDKTQGLRYLHCALCESEWNMTRAQCSNCDESGDLNYWSFDTVEAPIKAESCGDCHSYLKVLYQEKDPYVEPLADDLASLMLDIEMEQKGFVRSGLNPFLFSIE.

Belongs to the FdhE family.

The protein localises to the cytoplasm. In terms of biological role, necessary for formate dehydrogenase activity. In Haemophilus ducreyi (strain 35000HP / ATCC 700724), this protein is Protein FdhE homolog.